We begin with the raw amino-acid sequence, 434 residues long: Beta-enolase (434 aa).

The residue at position 2 (alanine 2) is an N-acetylalanine. At threonine 72 the chain carries Phosphothreonine. Phosphoserine occurs at positions 83 and 157. Histidine 158 and glutamate 167 together coordinate substrate. At serine 176 the chain carries Phosphoserine. Threonine 205 bears the Phosphothreonine mark. The active-site Proton donor is glutamate 210. Threonine 229 bears the Phosphothreonine mark. Tyrosine 236 is subject to Phosphotyrosine. Aspartate 245 contributes to the Mg(2+) binding site. Serine 263 carries the phosphoserine modification. Substrate is bound by residues glutamate 293 and aspartate 318. Mg(2+)-binding residues include glutamate 293 and aspartate 318. The Proton acceptor role is filled by lysine 343. Substrate is bound by residues 370-373 and lysine 394; that span reads SHRS.

Belongs to the enolase family. Mammalian enolase is composed of 3 isozyme subunits, alpha, beta and gamma, which can form homodimers or heterodimers which are cell-type and development-specific. Interacts with PNKD. It depends on Mg(2+) as a cofactor. In terms of tissue distribution, the alpha/alpha homodimer is expressed in embryo and in most adult tissues. The alpha/beta heterodimer and the beta/beta homodimer are found in striated muscle, and the alpha/gamma heterodimer and the gamma/gamma homodimer in neurons.

Its subcellular location is the cytoplasm. It carries out the reaction (2R)-2-phosphoglycerate = phosphoenolpyruvate + H2O. It functions in the pathway carbohydrate degradation; glycolysis; pyruvate from D-glyceraldehyde 3-phosphate: step 4/5. Glycolytic enzyme that catalyzes the conversion of 2-phosphoglycerate to phosphoenolpyruvate. Appears to have a function in striated muscle development and regeneration. This is Beta-enolase (Eno3) from Rattus norvegicus (Rat).